A 68-amino-acid polypeptide reads, in one-letter code: UPF0434 protein BMA10229_A1047 (68 aa).

Belongs to the UPF0434 family.

The polypeptide is UPF0434 protein BMA10229_A1047 (Burkholderia mallei (strain NCTC 10229)).